Consider the following 163-residue polypeptide: Small ribosomal subunit protein uS5 (163 aa).

One can recognise an S5 DRBM domain in the interval L8 to V71.

Belongs to the universal ribosomal protein uS5 family. As to quaternary structure, part of the 30S ribosomal subunit. Contacts proteins S4 and S8.

With S4 and S12 plays an important role in translational accuracy. Functionally, located at the back of the 30S subunit body where it stabilizes the conformation of the head with respect to the body. The chain is Small ribosomal subunit protein uS5 from Oleidesulfovibrio alaskensis (strain ATCC BAA-1058 / DSM 17464 / G20) (Desulfovibrio alaskensis).